We begin with the raw amino-acid sequence, 314 residues long: Nodulation protein D 1 (314 aa).

Residues 6-63 (LDLNLLVALDAVMTARNLTAAARKINLSQPAMSAAIARLRTYFRDELFTMRGRELVPT) enclose the HTH lysR-type domain. The segment at residues 23-42 (LTAAARKINLSQPAMSAAIA) is a DNA-binding region (H-T-H motif).

This sequence belongs to the LysR transcriptional regulatory family.

In terms of biological role, nodD regulates the expression of the nodABCFE genes which encode other nodulation proteins. NodD is also a negative regulator of its own expression. Binds flavonoids as inducers. The protein is Nodulation protein D 1 (nodD1) of Bradyrhizobium diazoefficiens (strain JCM 10833 / BCRC 13528 / IAM 13628 / NBRC 14792 / USDA 110).